The chain runs to 455 residues: Nucleoside-triphosphatase (455 aa).

The active-site Proton acceptor is the E168.

It belongs to the GDA1/CD39 NTPase family.

The protein resides in the nucleus. The enzyme catalyses a ribonucleoside 5'-triphosphate + H2O = a ribonucleoside 5'-diphosphate + phosphate + H(+). Its function is as follows. Might be involved in RNA transport out of nuclei. The polypeptide is Nucleoside-triphosphatase (Pisum sativum (Garden pea)).